Reading from the N-terminus, the 367-residue chain is PR domain zinc finger protein 12 (367 aa).

One can recognise an SET domain in the interval Ala86–Gly203. 3 consecutive C2H2-type zinc fingers follow at residues Met243–His265, Phe271–His293, and Tyr299–His323. Residues Gln318–Leu337 form a disordered region.

Belongs to the class V-like SAM-binding methyltransferase superfamily. Interacts with EHMT2. As to expression, not found in adult tissues except in dorsal root ganglia.

It localises to the nucleus. Transcriptional regulator necessary for the development of nociceptive neurons, playing a key role in determining the nociceptive lineage from neural crest cell progenitors. Initiates neurogenesis and activates downstream pro-neuronal transcription factors, such as NEUROD1, BRN3A, and ISL1, specifically within nociceptive neurons, while repressing non-nociceptor cell fates. Essential for the proper function of nociceptors in adults, influencing both their excitability and their gene expression, thereby impacting how these neurons respond to various pain stimuli. This Homo sapiens (Human) protein is PR domain zinc finger protein 12 (PRDM12).